Reading from the N-terminus, the 71-residue chain is Antimicrobial peptide VpCT4 (71 aa).

The signal sequence occupies residues 1 to 23 (MKTQFVILIVAIVILQLISQSEA). Leu39 carries the post-translational modification Leucine amide. The propeptide occupies 40–71 (GKRGVQNMDQFDDIFEPELSEADLRYLQDLLR).

Belongs to the non-disulfide-bridged peptide (NDBP) superfamily. Short antimicrobial peptide (group 4) family. In terms of tissue distribution, expressed by the venom gland.

The protein resides in the secreted. It is found in the target cell membrane. Its function is as follows. Antimicrobial peptide with potent activity against bacteria S.aureus (MIC=9.3 uM), weak activity against E.coli (MIC&gt;100 uM), and weak activity against pathogenic yeasts C.albicans (MIC=100 uM) and C.glabrata (MIC=100 uM). Is not very effective against P.aeruginosa (MIC&gt;300 uM). Also provokes high hemolysis on human erythrocytes (HC(50)=4.8 uM). The protein is Antimicrobial peptide VpCT4 of Mesomexovis punctatus (Scorpion).